The chain runs to 520 residues: Putative thymidine phosphorylase 1 (520 aa).

It belongs to the thymidine/pyrimidine-nucleoside phosphorylase family. Type 2 subfamily.

The enzyme catalyses thymidine + phosphate = 2-deoxy-alpha-D-ribose 1-phosphate + thymine. This chain is Putative thymidine phosphorylase 1, found in Cupriavidus necator (strain ATCC 17699 / DSM 428 / KCTC 22496 / NCIMB 10442 / H16 / Stanier 337) (Ralstonia eutropha).